The following is a 144-amino-acid chain: Large ribosomal subunit protein uL16 (144 aa).

Residues 1 to 19 show a composition bias toward basic residues; it reads MLLPKRVKYRRQHRPKTTG. A disordered region spans residues 1 to 23; the sequence is MLLPKRVKYRRQHRPKTTGRSKG.

This sequence belongs to the universal ribosomal protein uL16 family. Part of the 50S ribosomal subunit.

Functionally, binds 23S rRNA and is also seen to make contacts with the A and possibly P site tRNAs. The sequence is that of Large ribosomal subunit protein uL16 from Staphylococcus epidermidis (strain ATCC 35984 / DSM 28319 / BCRC 17069 / CCUG 31568 / BM 3577 / RP62A).